A 393-amino-acid chain; its full sequence is Elongation factor Tu (393 aa).

A tr-type G domain is found at 10 to 202 (KPHVNIGTIG…AVDEYIPTPE (193 aa)). Positions 19 to 26 (GHVDHGKT) are G1. 19–26 (GHVDHGKT) contributes to the GTP binding site. Thr26 is a Mg(2+) binding site. Residues 60–64 (GITIN) are G2. The interval 81–84 (DCPG) is G3. Residues 81–85 (DCPGH) and 136–139 (NKAD) contribute to the GTP site. The tract at residues 136-139 (NKAD) is G4. The interval 174–176 (SAL) is G5.

It belongs to the TRAFAC class translation factor GTPase superfamily. Classic translation factor GTPase family. EF-Tu/EF-1A subfamily. As to quaternary structure, monomer.

It localises to the cytoplasm. It carries out the reaction GTP + H2O = GDP + phosphate + H(+). Its function is as follows. GTP hydrolase that promotes the GTP-dependent binding of aminoacyl-tRNA to the A-site of ribosomes during protein biosynthesis. In Clostridium novyi (strain NT), this protein is Elongation factor Tu.